Here is a 355-residue protein sequence, read N- to C-terminus: WD repeat domain phosphoinositide-interacting protein 4 (355 aa).

2 WD repeats span residues 2 to 40 (SQQR…EKGH) and 185 to 225 (AHQS…QLVE). The L/FRRG motif motif lies at 226–229 (LRRG). The WD 3 repeat unit spans residues 230-269 (TDPATLYCINFSHDSSFLCSSSDKGTVHIFALKDTKLNRR).

This sequence belongs to the WD repeat PROPPIN family.

Its subcellular location is the preautophagosomal structure. Component of the autophagy machinery that controls the major intracellular degradation process by which cytoplasmic materials are packaged into autophagosomes and delivered to lysosomes for degradation. Binds phosphatidylinositol 3-phosphate (PtdIns3P). The polypeptide is WD repeat domain phosphoinositide-interacting protein 4 (wdr45) (Xenopus laevis (African clawed frog)).